The primary structure comprises 379 residues: Protein RecA (379 aa).

Position 79–86 (79–86 (GPESSGKT)) interacts with ATP.

This sequence belongs to the RecA family.

It localises to the cytoplasm. In terms of biological role, can catalyze the hydrolysis of ATP in the presence of single-stranded DNA, the ATP-dependent uptake of single-stranded DNA by duplex DNA, and the ATP-dependent hybridization of homologous single-stranded DNAs. It interacts with LexA causing its activation and leading to its autocatalytic cleavage. The sequence is that of Protein RecA from Streptococcus uberis (strain ATCC BAA-854 / 0140J).